Reading from the N-terminus, the 551-residue chain is MSDIAITISLLALVAVIGLWIGHWKIRGVGLGIGGVLFGGIIVAHFTNQYGLKLDAHTLHFVQEFGLILFVYTIGIQVGPGFFSSLRKSGLKLNAFAILIIVLGSIAVVLVHKIADVPLDIALGIYSGAVTNTPALGAGQQILAELGVPQTTVTMGVSYAMAYPFGICGILLAMWLIRLFFNVKVDDEAARFNAESSQDKESLHNISLKVTNQNLDGLTLIQIPGFSDEEVVCSRLKRDDMEIVPKASTEIRTNDILQLVGDDNSLAKMRLIIGHEVDAPTVAYSGEIRSERVVVTNEKVLGKKIRALGIHQKYGVVISRLNRAGIELVPTGNTTLQFGDVLHMVGRSDVLNQAISVIGNAQQKLLQVQMLPVFIGIGLGVLVGSIPFYIPGFPVALKLGLAGGPLVVALILARIGTIGKLYWFMPPSANLALREIGIVLFLAVVGLKSGGSFFDTLVNGSGLEWMGYGIFITFVPLIIVGTIARLYGKLNYLTICGLLAGSMTDPPALAFANEIKEDNGAAALSYATVYPLVMFLRIMSPQLLAVLLWAA.

The next 5 helical transmembrane spans lie at Ile4–Trp24, Gly28–Asn48, Phe65–Ser85, Ala95–Ala115, and Val157–Ile177. RCK C-terminal domains are found at residues Arg191–His275 and Val277–Asn360. The next 6 membrane-spanning stretches (helical) occupy residues Met370–Ile390, Ala402–Phe424, Ile438–Val458, Leu463–Ile483, Tyr492–Ala512, and Val529–Trp549.

Belongs to the AAE transporter (TC 2.A.81) family. YidE subfamily.

The protein localises to the cell membrane. The chain is Putative transport protein CGSHiGG_02670 from Haemophilus influenzae (strain PittGG).